The sequence spans 225 residues: C-reactive protein (225 aa).

An N-terminal signal peptide occupies residues 1–19 (MEKLLWCLLIMISFSRTFG). Positions 24–225 (FKKAFVFPKE…DVFIKPQLWS (202 aa)) constitute a Pentraxin (PTX) domain. A disulfide bridge links Cys55 with Cys116. Positions 80, 157, 158, 159, and 169 each coordinate Ca(2+).

It belongs to the pentraxin family. As to quaternary structure, homopentamer. Pentraxin (or pentaxin) have a discoid arrangement of 5 non-covalently bound subunits. Interacts with FCN1; may regulate monocyte activation by FCN1. Ca(2+) is required as a cofactor. Found in plasma.

Its subcellular location is the secreted. In terms of biological role, displays several functions associated with host defense: it promotes agglutination, bacterial capsular swelling, phagocytosis and complement fixation through its calcium-dependent binding to phosphorylcholine. Can interact with DNA and histones and may scavenge nuclear material released from damaged circulating cells. This chain is C-reactive protein (Crp), found in Mus musculus (Mouse).